The following is a 252-amino-acid chain: Phosphoglycolate phosphatase (252 aa).

The Nucleophile role is filled by D13. D13, D15, and D192 together coordinate Mg(2+).

It belongs to the HAD-like hydrolase superfamily. CbbY/CbbZ/Gph/YieH family. In terms of assembly, monomer. The cofactor is Mg(2+). Chloride is required as a cofactor.

It carries out the reaction 2-phosphoglycolate + H2O = glycolate + phosphate. It participates in organic acid metabolism; glycolate biosynthesis; glycolate from 2-phosphoglycolate: step 1/1. Functionally, specifically catalyzes the dephosphorylation of 2-phosphoglycolate. Is involved in the dissimilation of the intracellular 2-phosphoglycolate formed during the DNA repair of 3'-phosphoglycolate ends, a major class of DNA lesions induced by oxidative stress. The protein is Phosphoglycolate phosphatase of Shigella sonnei (strain Ss046).